The following is a 114-amino-acid chain: Large ribosomal subunit protein bL19 (114 aa).

Belongs to the bacterial ribosomal protein bL19 family.

In terms of biological role, this protein is located at the 30S-50S ribosomal subunit interface and may play a role in the structure and function of the aminoacyl-tRNA binding site. This Clostridium botulinum (strain Loch Maree / Type A3) protein is Large ribosomal subunit protein bL19.